Consider the following 156-residue polypeptide: Protein LlR18A (156 aa).

The trans-zeatin site is built by asparagine 8 and aspartate 28. Ca(2+) is bound by residues proline 32 and isoleucine 38. The trans-zeatin site is built by lysine 54, aspartate 133, and lysine 136.

This sequence belongs to the BetVI family. As to expression, expressed constitutively in roots.

The protein resides in the cytoplasm. The protein localises to the cytosol. Class II ribonuclease (RNase). Binds to cytokinins. Interacts with melatonin. The sequence is that of Protein LlR18A (LLR18A) from Lupinus luteus (European yellow lupine).